The sequence spans 445 residues: Xylose isomerase (445 aa).

Catalysis depends on residues His-107 and Asp-110. Residues Glu-238, Glu-274, His-277, Asp-302, Asp-313, Asp-315, and Asp-345 each contribute to the Mg(2+) site.

Belongs to the xylose isomerase family. Homotetramer. The cofactor is Mg(2+).

It is found in the cytoplasm. The catalysed reaction is alpha-D-xylose = alpha-D-xylulofuranose. In Bacillus velezensis (strain DSM 23117 / BGSC 10A6 / LMG 26770 / FZB42) (Bacillus amyloliquefaciens subsp. plantarum), this protein is Xylose isomerase.